We begin with the raw amino-acid sequence, 155 residues long: Ribosome maturation factor RimP (155 aa).

This sequence belongs to the RimP family.

It localises to the cytoplasm. Functionally, required for maturation of 30S ribosomal subunits. The protein is Ribosome maturation factor RimP of Listeria monocytogenes serotype 4a (strain HCC23).